The following is a 495-amino-acid chain: Ectonucleoside triphosphate diphosphohydrolase 2 (495 aa).

Residues 1–7 are Cytoplasmic-facing; it reads MAGKVRS. A helical membrane pass occupies residues 8–28; it reads LLPPLLLAAAGLAGLLLLCVP. Over 29–462 the chain is Extracellular; sequence TRDVREPPAL…PGLRKGTDFS (434 aa). The N-linked (GlcNAc...) asparagine glycan is linked to Asn64. A disulfide bridge links Cys75 with Cys99. N-linked (GlcNAc...) asparagine glycosylation is present at Asn129. Glu165 serves as the catalytic Proton acceptor. 204–208 is an ATP binding site; that stretch reads GASTQ. 4 disulfide bridges follow: Cys242–Cys284, Cys265–Cys310, Cys323–Cys328, and Cys377–Cys399. Asn294 is a glycosylation site (N-linked (GlcNAc...) asparagine). N-linked (GlcNAc...) asparagine glycans are attached at residues Asn378 and Asn443. The helical transmembrane segment at 463–483 threads the bilayer; that stretch reads SWVVLLLLFASALLAALVLLL. The Cytoplasmic portion of the chain corresponds to 484-495; that stretch reads RQVHSAKLPSTI.

Belongs to the GDA1/CD39 NTPase family. The cofactor is Ca(2+). Mg(2+) serves as cofactor. As to expression, brain, placenta, skeletal muscle, kidney, pancreas, heart, ovary, testis, colon, small intestine, prostate and pancreas. No expression in adult thymus, spleen, lung, liver and peripheral blood leukocytes.

The protein localises to the cell membrane. Its subcellular location is the endoplasmic reticulum membrane. In terms of biological role, in the nervous system, could hydrolyze ATP and other nucleotides to regulate purinergic neurotransmission. Hydrolyzes ADP only to a marginal extent. The order of activity with different substrates is ATP &gt; GTP &gt; CTP = ITP &gt; UTP &gt;&gt; ADP = UDP. This Homo sapiens (Human) protein is Ectonucleoside triphosphate diphosphohydrolase 2 (ENTPD2).